The following is a 329-amino-acid chain: MQGSVTEFLKPRLVDIEQVSTTHAKVTLEPLERGFGHTLGNALRRILLSSMPGCAVTEVEIEGVLHEYSTKEGVQEDILEILLNLKGLAVKVEGKDEVIITLNKSGAGPVVAGDITHDGDVEIANPEHVICHLTDDNAEISMRIKVERGRGYVPSTARIHTEEDERPIGRLLVDATYSPVDKISYAVEAARVEQRTDLDKLVIDMETNGTLDPEEAIRRAATILAEQLDAFVDLRDVRVPEEKEEKPEFDPILLRPVDDLELTVRSANCLKAEAIHYIGDLVQRTEVELLKTPNLGKKSLTEIKDVLASRGLSLGMRLENWPPASIAED.

The tract at residues 1 to 235 (MQGSVTEFLK…EQLDAFVDLR (235 aa)) is alpha N-terminal domain (alpha-NTD). The segment at 249-329 (FDPILLRPVD…NWPPASIAED (81 aa)) is alpha C-terminal domain (alpha-CTD).

Belongs to the RNA polymerase alpha chain family. As to quaternary structure, homodimer. The RNAP catalytic core consists of 2 alpha, 1 beta, 1 beta' and 1 omega subunit. When a sigma factor is associated with the core the holoenzyme is formed, which can initiate transcription.

It carries out the reaction RNA(n) + a ribonucleoside 5'-triphosphate = RNA(n+1) + diphosphate. DNA-dependent RNA polymerase catalyzes the transcription of DNA into RNA using the four ribonucleoside triphosphates as substrates. This is DNA-directed RNA polymerase subunit alpha from Aliivibrio fischeri (strain ATCC 700601 / ES114) (Vibrio fischeri).